A 191-amino-acid chain; its full sequence is 3-isopropylmalate dehydratase small subunit (191 aa).

This sequence belongs to the LeuD family. LeuD type 1 subfamily. In terms of assembly, heterodimer of LeuC and LeuD.

It carries out the reaction (2R,3S)-3-isopropylmalate = (2S)-2-isopropylmalate. It functions in the pathway amino-acid biosynthesis; L-leucine biosynthesis; L-leucine from 3-methyl-2-oxobutanoate: step 2/4. Catalyzes the isomerization between 2-isopropylmalate and 3-isopropylmalate, via the formation of 2-isopropylmaleate. The protein is 3-isopropylmalate dehydratase small subunit of Anaeromyxobacter dehalogenans (strain 2CP-1 / ATCC BAA-258).